A 140-amino-acid polypeptide reads, in one-letter code: Nucleoside diphosphate kinase (140 aa).

Residues lysine 11, phenylalanine 59, arginine 87, threonine 93, arginine 104, and asparagine 114 each coordinate ATP. The Pros-phosphohistidine intermediate role is filled by histidine 117.

It belongs to the NDK family. In terms of assembly, homotetramer. Mg(2+) is required as a cofactor.

Its subcellular location is the cytoplasm. It carries out the reaction a 2'-deoxyribonucleoside 5'-diphosphate + ATP = a 2'-deoxyribonucleoside 5'-triphosphate + ADP. The catalysed reaction is a ribonucleoside 5'-diphosphate + ATP = a ribonucleoside 5'-triphosphate + ADP. Functionally, major role in the synthesis of nucleoside triphosphates other than ATP. The ATP gamma phosphate is transferred to the NDP beta phosphate via a ping-pong mechanism, using a phosphorylated active-site intermediate. The protein is Nucleoside diphosphate kinase of Brucella melitensis biotype 1 (strain ATCC 23456 / CCUG 17765 / NCTC 10094 / 16M).